Consider the following 350-residue polypeptide: tRNA uridine(34) hydroxylase (350 aa).

The 95-residue stretch at 146–240 (DDPDALFIDM…YARKAREQGL (95 aa)) folds into the Rhodanese domain. The active-site Cysteine persulfide intermediate is the Cys200.

Belongs to the TrhO family.

The catalysed reaction is uridine(34) in tRNA + AH2 + O2 = 5-hydroxyuridine(34) in tRNA + A + H2O. Functionally, catalyzes oxygen-dependent 5-hydroxyuridine (ho5U) modification at position 34 in tRNAs, the first step in 5-carboxymethoxyuridine (cmo5U) biosynthesis. May be part of an alternate pathway, which is able to bypass cmo5U biogenesis in a subset of tRNAs under aerobic conditions. This Escherichia coli O9:H4 (strain HS) protein is tRNA uridine(34) hydroxylase.